We begin with the raw amino-acid sequence, 668 residues long: Probable potassium transport system protein Kup (668 aa).

Helical transmembrane passes span 17–37 (GILV…LYVM), 59–79 (VSLI…VIAL), 104–124 (IIPA…TPAV), 148–168 (TIIV…QRFG), 175–195 (AFGP…LMNF), 221–241 (LGLF…ALYS), 256–276 (PYIK…LLTV), 299–319 (ILVF…QALI), 350–370 (MYIP…VLAF), 380–400 (YGLS…FYLL), 403–423 (IPAW…VVFF), and 430–450 (FFHG…IMII).

This sequence belongs to the HAK/KUP transporter (TC 2.A.72) family.

The protein localises to the cell membrane. It carries out the reaction K(+)(in) + H(+)(in) = K(+)(out) + H(+)(out). Transport of potassium into the cell. Likely operates as a K(+):H(+) symporter. This Enterococcus faecalis (strain ATCC 700802 / V583) protein is Probable potassium transport system protein Kup.